The following is a 1497-amino-acid chain: Polyunsaturated fatty acid synthase subunit C (1497 aa).

2 dehydratase (DH) domain regions span residues 271 to 422 and 797 to 937; these read YKLC…DYGK and QGQY…RVRI. A compositionally biased stretch (low complexity) spans 944–958; sequence ASSSASSVGSSASAE. Positions 944-977 are disordered; it reads ASSSASSVGSSASAEVAERTRSKAAPQPVASGPA. The tract at residues 1026–1470 is enoylreductase (ER) domain; the sequence is LGDLGDRSFM…ILRGACYLRR (445 aa).

It belongs to the thioester dehydratase family. FabA subfamily. As to quaternary structure, component of the polyunsaturated fatty acid synthase complex composed of at least ORF-A, ORF-B and ORF-C.

It participates in lipid metabolism; fatty acid biosynthesis. In terms of biological role, polyketide synthase-like protein; part of the polyunsaturated fatty acid synthase composed of the 3 PKS-like subunits A, B and C. While the saturated fatty acids (SFAs) in Thraustochytrium are produced by the conventional fatty acid synthase (FAS) pathway, polyunsaturated fatty acids (PUFAs) including docosahexeanoic acid (DHA) and docosapentaenoic acid (DPA) are synthesized via an anaerobical PKS pathway. PUFA synthase assimilates fatty acyl-CoA, the product of FAS, as the starter unit to synthesize DPA, and this starter unit may be butyryl-CoA, hexanoyl-CoA, or octanoyl-CoA. DPA and DHA biosynthesis seem to differ by the reduction at the N-3 position by PUFA synthase, not the extension of carbon chain. In DHA biosynthesis, PUFA synthase extends the fatty acyl chain from the methyl toward the carboxyl end, and the double bond is formed when the carbon chain is growing, instead of afterward. Therefore, PUFA synthase is unable to transform DPA to DHA, suggesting that DPA is not the precursor of DHA. Moreover, DPA molecule is partly extended by FAS KS domain, so DPA biosynthesis is less dependent on PUFA synthase KS domain than DHA. In Thraustochytrium sp. (strain ATCC 26185 / S-3), this protein is Polyunsaturated fatty acid synthase subunit C.